Here is a 418-residue protein sequence, read N- to C-terminus: Sterigmatocystin 8-O-methyltransferase (418 aa).

Residues 1–41 (MALPSKAALVGLANTLSEQVKRYLATAGETKSPEDHKLCIE) constitute a propeptide that is removed on maturation. Residue 170 to 176 (MRSGASF) participates in substrate binding. The substrate binding stretch occupies residues 206–225 (LFDYYSTVDEVRGRRFDLGM). S-adenosyl-L-methionine is bound by residues 254–255 (GG), Asp-277, 297–298 (DI), and Arg-313. His-317 acts as the Proton acceptor in catalysis.

This sequence belongs to the class I-like SAM-binding methyltransferase superfamily. Cation-independent O-methyltransferase family. COMT subfamily.

Its subcellular location is the cytoplasm. It localises to the vacuole. The enzyme catalyses sterigmatocystin + S-adenosyl-L-methionine = 8-O-methylsterigmatocystin + S-adenosyl-L-homocysteine + H(+). The catalysed reaction is dihydrosterigmatocystin + S-adenosyl-L-methionine = 8-O-methyldihydrosterigmatocystin + S-adenosyl-L-homocysteine + H(+). It functions in the pathway mycotoxin biosynthesis; aflatoxin biosynthesis. Sterigmatocystin 8-O-methyltransferase; part of the gene cluster that mediates the biosynthesis of aflatoxins, a group of polyketide-derived furanocoumarins, and part of the most toxic and carcinogenic compounds among the known mycotoxins. The four major aflatoxins produced by A.parasiticus are aflatoxin B1 (AFB1), aflatoxin B2 (AFB2), aflatoxin G1 (AFG1) and aflatoxin G2 (AFG2). Within the aflatoxin pathway, the O-methyltransferase aflP uses both sterigmatocystin (ST) and dihydrosterigmatocystin (DHST) as substrates to yield O-methylsterigmatocystin (OMST) and dihydro-O-methylsterigmatocystin (DHOMST), respectively. The biosynthesis of aflatoxins begins with the norsolorinic acid synthase aflC that combines a hexanoyl starter unit produced by the fatty acid synthase aflA/aflB and 7 malonyl-CoA extender units to synthesize the precursor NOR. The second step is the conversion of NOR to averantin and requires the norsolorinic acid ketoreductase aflD, which catalyzes the dehydration of norsolorinic acid to form (1'S)-averantin. The norsolorinic acid reductases aflE and aflF may also play a role in the conversion of NOR to AVN. The cytochrome P450 monooxygenase aflG then catalyzes the hydroxylation of AVN to 5'hydroxyaverantin (HAVN). The next step is performed by the 5'-hydroxyaverantin dehydrogenase aflH that transforms HAVN to 5'-oxoaverantin (OAVN) which is further converted to averufin (AVF) by aflK that plays a dual role in the pathway, as a 5'-oxoaverantin cyclase that mediates conversion of 5'-oxoaverantin, as well as a versicolorin B synthase in a later step in the pathway. The averufin oxidase aflI catalyzes the conversion of AVF to versiconal hemiacetal acetate (VHA). VHA is then the substrate for the versiconal hemiacetal acetate esterase aflJ to yield versiconal (VAL). Versicolorin B synthase aflK then converts VAL to versicolorin B (VERB) by closing the bisfuran ring of aflatoxin which is required for DNA-binding, thus giving to aflatoxin its activity as a mutagen. Then, the activity of the versicolorin B desaturase aflL leads to versicolorin A (VERA). A branch point starts from VERB since it can also be converted to dihydrodemethylsterigmatocystin (DMDHST), probably also by aflL, VERA being a precursor for aflatoxins B1 and G1, and DMDHST for aflatoxins B2 and G2. Next, the versicolorin reductase aflM and the cytochrome P450 monooxygenase aflN are involved in conversion of VERA to demethylsterigmatocystin (DMST). AflX and aflY seem also involved in this step, through probable aflX-mediated epoxide ring-opening step following versicolorin A oxidation and aflY-mediated Baeyer-Villiger oxidation required for the formation of the xanthone ring. The methyltransferase aflO then leads to the modification of DMST to sterigmatocystin (ST), and of DMDHST to dihydrosterigmatocystin (DHST). Both ST and DHST are then substrates of the O-methyltransferase aflP to yield O-methylsterigmatocystin (OMST) and dihydro-O-methylsterigmatocystin (DHOMST), respectively. Finally OMST is converted to aflatoxins B1 and G1, and DHOMST to aflatoxins B2 and G2, via the action of several enzymes including O-methylsterigmatocystin oxidoreductase aflQ, the cytochrome P450 monooxygenase aflU, but also the NADH-dependent flavin oxidoreductase nadA which is specifically required for the synthesis of AFG1. The polypeptide is Sterigmatocystin 8-O-methyltransferase (Aspergillus parasiticus (strain ATCC 56775 / NRRL 5862 / SRRC 143 / SU-1)).